The following is a 348-amino-acid chain: Dihydroorotase (348 aa).

Zn(2+) contacts are provided by histidine 17 and histidine 19. Substrate is bound by residues 19-21 (HLR) and asparagine 45. Positions 103, 140, and 178 each coordinate Zn(2+). At lysine 103 the chain carries N6-carboxylysine. Histidine 140 serves as a coordination point for substrate. Residue leucine 223 coordinates substrate. Position 251 (aspartate 251) interacts with Zn(2+). Aspartate 251 is an active-site residue. Histidine 255 and alanine 267 together coordinate substrate.

Belongs to the metallo-dependent hydrolases superfamily. DHOase family. Class II DHOase subfamily. Homodimer. Requires Zn(2+) as cofactor.

The catalysed reaction is (S)-dihydroorotate + H2O = N-carbamoyl-L-aspartate + H(+). It participates in pyrimidine metabolism; UMP biosynthesis via de novo pathway; (S)-dihydroorotate from bicarbonate: step 3/3. Catalyzes the reversible cyclization of carbamoyl aspartate to dihydroorotate. This chain is Dihydroorotase, found in Escherichia coli (strain SMS-3-5 / SECEC).